Here is an 869-residue protein sequence, read N- to C-terminus: Bifunctional uridylyltransferase/uridylyl-removing enzyme (869 aa).

The interval 1–331 (MPTNLPALPM…FPSESQVTRV (331 aa)) is uridylyltransferase. Positions 332–688 (INERFVERQG…ARISPAGEGL (357 aa)) are uridylyl-removing. The HD domain occupies 450–572 (VDQHILMVVR…VGDERHLTAL (123 aa)). 2 ACT domains span residues 689-773 (QVAV…PSQG) and 800-869 (LLSL…ALEI).

It belongs to the GlnD family. Requires Mg(2+) as cofactor.

It carries out the reaction [protein-PII]-L-tyrosine + UTP = [protein-PII]-uridylyl-L-tyrosine + diphosphate. The enzyme catalyses [protein-PII]-uridylyl-L-tyrosine + H2O = [protein-PII]-L-tyrosine + UMP + H(+). With respect to regulation, uridylyltransferase (UTase) activity is inhibited by glutamine, while glutamine activates uridylyl-removing (UR) activity. Functionally, modifies, by uridylylation and deuridylylation, the PII regulatory proteins (GlnB and homologs), in response to the nitrogen status of the cell that GlnD senses through the glutamine level. Under low glutamine levels, catalyzes the conversion of the PII proteins and UTP to PII-UMP and PPi, while under higher glutamine levels, GlnD hydrolyzes PII-UMP to PII and UMP (deuridylylation). Thus, controls uridylylation state and activity of the PII proteins, and plays an important role in the regulation of nitrogen assimilation and metabolism. This is Bifunctional uridylyltransferase/uridylyl-removing enzyme from Cupriavidus pinatubonensis (strain JMP 134 / LMG 1197) (Cupriavidus necator (strain JMP 134)).